The primary structure comprises 218 residues: Large ribosomal subunit protein bL25 (218 aa).

It belongs to the bacterial ribosomal protein bL25 family. CTC subfamily. Part of the 50S ribosomal subunit; part of the 5S rRNA/L5/L18/L25 subcomplex. Contacts the 5S rRNA. Binds to the 5S rRNA independently of L5 and L18.

In terms of biological role, this is one of the proteins that binds to the 5S RNA in the ribosome where it forms part of the central protuberance. In Polaromonas naphthalenivorans (strain CJ2), this protein is Large ribosomal subunit protein bL25.